A 95-amino-acid chain; its full sequence is Small ribosomal subunit protein uS19 (95 aa).

It belongs to the universal ribosomal protein uS19 family.

Protein S19 forms a complex with S13 that binds strongly to the 16S ribosomal RNA. The polypeptide is Small ribosomal subunit protein uS19 (Chloroflexus aggregans (strain MD-66 / DSM 9485)).